Here is a 350-residue protein sequence, read N- to C-terminus: Kelch domain-containing protein 9 (350 aa).

3 Kelch repeats span residues Arg-39 to Gly-89, Trp-91 to Cys-137, and Gln-325 to Ile-350.

In terms of assembly, interacts with CCNA1.

In Mus musculus (Mouse), this protein is Kelch domain-containing protein 9 (Klhdc9).